Here is a 355-residue protein sequence, read N- to C-terminus: Phosphoribosylformylglycinamidine cyclo-ligase (355 aa).

The protein belongs to the AIR synthase family.

It localises to the cytoplasm. The catalysed reaction is 2-formamido-N(1)-(5-O-phospho-beta-D-ribosyl)acetamidine + ATP = 5-amino-1-(5-phospho-beta-D-ribosyl)imidazole + ADP + phosphate + H(+). The protein operates within purine metabolism; IMP biosynthesis via de novo pathway; 5-amino-1-(5-phospho-D-ribosyl)imidazole from N(2)-formyl-N(1)-(5-phospho-D-ribosyl)glycinamide: step 2/2. In Methylobacterium sp. (strain 4-46), this protein is Phosphoribosylformylglycinamidine cyclo-ligase.